Reading from the N-terminus, the 200-residue chain is MAKVLVLYYSSYGHVETMAQHVAEGAKSVPGVEVTLKRVPETIPVDQAKAIGVKVDQAAPVATVDELANYDAIIFGTPTRFGNMAGQMRTFLDQTGGLWMKGALVGKIGSVFASTGTQHGGQETTITSFHTTLLHHGMVIVGVPYACSGLVDMKEITGGTPYGATTLAGADGSRQPSANELDIARYQGKHVAQLAAKLAA.

The Flavodoxin-like domain occupies 4 to 191 (VLVLYYSSYG…DIARYQGKHV (188 aa)). FMN-binding positions include 10–15 (SSYGHV) and 79–81 (TRF). Y12 provides a ligand contact to NAD(+). Residue W99 coordinates substrate. FMN-binding positions include 114–120 (STGTQHG) and H135.

This sequence belongs to the WrbA family. The cofactor is FMN.

The catalysed reaction is a quinone + NADH + H(+) = a quinol + NAD(+). The enzyme catalyses a quinone + NADPH + H(+) = a quinol + NADP(+). The chain is NAD(P)H dehydrogenase (quinone) from Burkholderia vietnamiensis (strain G4 / LMG 22486) (Burkholderia cepacia (strain R1808)).